Here is a 147-residue protein sequence, read N- to C-terminus: Large ribosomal subunit protein uL13 (147 aa).

The protein belongs to the universal ribosomal protein uL13 family. In terms of assembly, part of the 50S ribosomal subunit.

Functionally, this protein is one of the early assembly proteins of the 50S ribosomal subunit, although it is not seen to bind rRNA by itself. It is important during the early stages of 50S assembly. The chain is Large ribosomal subunit protein uL13 from Mycobacterium leprae (strain Br4923).